The chain runs to 1275 residues: Surfactin synthase subunit 3 (1275 aa).

Positions 968-1043 constitute a Carrier domain; that stretch reads GPRNEMEETI…GISAYLKNGG (76 aa). Ser-1003 bears the O-(pantetheine 4'-phosphoryl)serine mark. Positions 1059–1271 are thioesterase; that stretch reads QIIFAFPPVL…ILLEFLNTQT (213 aa). Active-site residues include Ser-1120, Asp-1147, and His-1247.

It belongs to the ATP-dependent AMP-binding enzyme family. Pantetheine 4'-phosphate is required as a cofactor.

The protein operates within antibiotic biosynthesis; surfactin biosynthesis. Probably activates a leucine. The polypeptide is Surfactin synthase subunit 3 (srfAC) (Bacillus subtilis (strain 168)).